Consider the following 172-residue polypeptide: Ribosome maturation factor RimM (172 aa).

The PRC barrel domain occupies 96-169 (PDEFYDHQLE…AIEIDPPEGL (74 aa)).

This sequence belongs to the RimM family. Binds ribosomal protein uS19.

Its subcellular location is the cytoplasm. An accessory protein needed during the final step in the assembly of 30S ribosomal subunit, possibly for assembly of the head region. Essential for efficient processing of 16S rRNA. May be needed both before and after RbfA during the maturation of 16S rRNA. It has affinity for free ribosomal 30S subunits but not for 70S ribosomes. This chain is Ribosome maturation factor RimM, found in Mycolicibacterium vanbaalenii (strain DSM 7251 / JCM 13017 / BCRC 16820 / KCTC 9966 / NRRL B-24157 / PYR-1) (Mycobacterium vanbaalenii).